Here is a 591-residue protein sequence, read N- to C-terminus: Protein misato homolog 1 (591 aa).

It belongs to the misato family.

It localises to the mitochondrion outer membrane. The protein resides in the cytoplasm. In terms of biological role, involved in the regulation of mitochondrial distribution and morphology. Required for mitochondrial fusion and mitochondrial network formation. The sequence is that of Protein misato homolog 1 (msto1) from Danio rerio (Zebrafish).